Here is a 427-residue protein sequence, read N- to C-terminus: 3-phosphoshikimate 1-carboxyvinyltransferase (427 aa).

The 3-phosphoshikimate site is built by K22, S23, and R27. Position 22 (K22) interacts with phosphoenolpyruvate. G96 and R124 together coordinate phosphoenolpyruvate. S169, S170, Q171, S197, D313, N336, and K340 together coordinate 3-phosphoshikimate. Q171 is a phosphoenolpyruvate binding site. The active-site Proton acceptor is the D313. The phosphoenolpyruvate site is built by R344, R386, and K411.

The protein belongs to the EPSP synthase family. As to quaternary structure, monomer.

It is found in the cytoplasm. The catalysed reaction is 3-phosphoshikimate + phosphoenolpyruvate = 5-O-(1-carboxyvinyl)-3-phosphoshikimate + phosphate. The protein operates within metabolic intermediate biosynthesis; chorismate biosynthesis; chorismate from D-erythrose 4-phosphate and phosphoenolpyruvate: step 6/7. Catalyzes the transfer of the enolpyruvyl moiety of phosphoenolpyruvate (PEP) to the 5-hydroxyl of shikimate-3-phosphate (S3P) to produce enolpyruvyl shikimate-3-phosphate and inorganic phosphate. This Escherichia coli O127:H6 (strain E2348/69 / EPEC) protein is 3-phosphoshikimate 1-carboxyvinyltransferase.